Here is a 309-residue protein sequence, read N- to C-terminus: Acetylglutamate kinase (309 aa).

Residues Gly82–Gly83, Arg104, and Asn206 each bind substrate.

It belongs to the acetylglutamate kinase family. ArgB subfamily.

The protein localises to the cytoplasm. It carries out the reaction N-acetyl-L-glutamate + ATP = N-acetyl-L-glutamyl 5-phosphate + ADP. The protein operates within amino-acid biosynthesis; L-arginine biosynthesis; N(2)-acetyl-L-ornithine from L-glutamate: step 2/4. In terms of biological role, catalyzes the ATP-dependent phosphorylation of N-acetyl-L-glutamate. The polypeptide is Acetylglutamate kinase (Cupriavidus metallidurans (strain ATCC 43123 / DSM 2839 / NBRC 102507 / CH34) (Ralstonia metallidurans)).